The following is a 247-amino-acid chain: Flavin-dependent thymidylate synthase (247 aa).

Residues M1 to E237 enclose the ThyX domain. Residues Q85–R88, S98–R100, and R176 contribute to the dUMP site. R88–R90 contacts FAD. Residues R88–S98 carry the ThyX motif motif. Residues N192–R194 and H198 each bind FAD. Residue R203 coordinates dUMP. R203 serves as the catalytic Involved in ionization of N3 of dUMP, leading to its activation.

Belongs to the thymidylate synthase ThyX family. As to quaternary structure, homotetramer. The cofactor is FAD.

The catalysed reaction is dUMP + (6R)-5,10-methylene-5,6,7,8-tetrahydrofolate + NADPH + H(+) = dTMP + (6S)-5,6,7,8-tetrahydrofolate + NADP(+). It functions in the pathway pyrimidine metabolism; dTTP biosynthesis. Catalyzes the reductive methylation of 2'-deoxyuridine-5'-monophosphate (dUMP) to 2'-deoxythymidine-5'-monophosphate (dTMP) while utilizing 5,10-methylenetetrahydrofolate (mTHF) as the methyl donor, and NADPH and FADH(2) as the reductant. The polypeptide is Flavin-dependent thymidylate synthase (Halobacterium salinarum (strain ATCC 700922 / JCM 11081 / NRC-1) (Halobacterium halobium)).